Consider the following 208-residue polypeptide: MEVNIFNIKGEETGRKVILEDSVFRVEPNDYIVYLDVRRYLANKRQGTAKSKERSEMSGSTRKLGRQKGSGGARRGDINSPVLVGGARVFGPKPRDYSFKLNKKEKKMARRSVLSCRMREGGVIVVEDFSFETPKTKEFLDLAKNLKIQIANSKLLVILPEKDDNIFLSARNISKVKVTTVSNLNTYEILDVNRLVILESSVVAINNF.

The tract at residues 45–78 (RQGTAKSKERSEMSGSTRKLGRQKGSGGARRGDI) is disordered.

This sequence belongs to the universal ribosomal protein uL4 family. In terms of assembly, part of the 50S ribosomal subunit.

Its function is as follows. One of the primary rRNA binding proteins, this protein initially binds near the 5'-end of the 23S rRNA. It is important during the early stages of 50S assembly. It makes multiple contacts with different domains of the 23S rRNA in the assembled 50S subunit and ribosome. Functionally, forms part of the polypeptide exit tunnel. The protein is Large ribosomal subunit protein uL4 of Azobacteroides pseudotrichonymphae genomovar. CFP2.